The chain runs to 137 residues: MSMKTTQEINKEDEELCNESKKFMDVYYDVMDRKREKIGFLYTQVSNAVWNGNPINGYDSICEFMKALPSTQHDIQSLDAQRLPEGVTGDMSGGMLLNVAGAVTVDGDSKRAFTQTLLLGVEDGKYKVKSDRFRYVD.

An NTF2 domain is found at 19–135; it reads ESKKFMDVYY…YKVKSDRFRY (117 aa).

As to quaternary structure, preferentially binds Ran-GTP.

It localises to the nucleus. In terms of biological role, stimulator of protein export for NES-containing proteins. Also plays a role in the nuclear export of U1 snRNA, tRNA, and mRNA. This Caenorhabditis elegans protein is NTF2-related export protein (nxt-1).